We begin with the raw amino-acid sequence, 457 residues long: Putative purine-cytosine permease YxlA (457 aa).

Transmembrane regions (helical) follow at residues 24–44, 50–70, 90–110, 127–147, 164–184, 192–212, 228–248, 264–284, 316–336, 341–361, 392–412, and 420–440; these read FPVW…TIPV, LFWS…FMAS, FGVI…LGFF, IPGS…TIFG, AVFF…GSWI, IFLV…PYVA, FWYS…LGAL, IVQL…FGQM, IIMI…GQSN, FLNF…INLV, IAFV…FYIG, and GGDI…YVLM.

This sequence belongs to the purine-cytosine permease (2.A.39) family.

Its subcellular location is the cell membrane. This Bacillus subtilis (strain 168) protein is Putative purine-cytosine permease YxlA (yxlA).